Reading from the N-terminus, the 257-residue chain is Snake venom serine protease KN11 (257 aa).

A signal peptide spans 1-18; sequence MVLIRVLANLLILQLSYA. A propeptide spanning residues 19–24 is cleaved from the precursor; it reads QKSSEL. In terms of domain architecture, Peptidase S1 spans 25–248; sequence VTGGHPCNIN…HLDWIKSIIA (224 aa). 6 disulfides stabilise this stretch: Cys31/Cys162, Cys49/Cys65, Cys97/Cys255, Cys141/Cys209, Cys173/Cys188, and Cys199/Cys224. Residues His64 and Asp109 each act as charge relay system in the active site. N-linked (GlcNAc...) asparagine glycosylation is found at Asn120 and Asn121. The active-site Charge relay system is the Ser203.

It belongs to the peptidase S1 family. Snake venom subfamily. In terms of assembly, monomer. As to expression, expressed by the venom gland.

It is found in the secreted. Snake venom serine protease that may act in the hemostasis system of the prey. This Trimeresurus stejnegeri (Chinese green tree viper) protein is Snake venom serine protease KN11.